Consider the following 274-residue polypeptide: tRNA pseudouridine synthase A (274 aa).

Catalysis depends on aspartate 51, which acts as the Nucleophile. Substrate is bound at residue tyrosine 109.

It belongs to the tRNA pseudouridine synthase TruA family. As to quaternary structure, homodimer.

The catalysed reaction is uridine(38/39/40) in tRNA = pseudouridine(38/39/40) in tRNA. In terms of biological role, formation of pseudouridine at positions 38, 39 and 40 in the anticodon stem and loop of transfer RNAs. The sequence is that of tRNA pseudouridine synthase A from Acidovorax sp. (strain JS42).